Reading from the N-terminus, the 313-residue chain is Ribosomal RNA small subunit methyltransferase H (313 aa).

S-adenosyl-L-methionine is bound by residues 35–37, D55, F79, D101, and Q108; that span reads GGH.

Belongs to the methyltransferase superfamily. RsmH family.

Its subcellular location is the cytoplasm. The catalysed reaction is cytidine(1402) in 16S rRNA + S-adenosyl-L-methionine = N(4)-methylcytidine(1402) in 16S rRNA + S-adenosyl-L-homocysteine + H(+). Functionally, specifically methylates the N4 position of cytidine in position 1402 (C1402) of 16S rRNA. The chain is Ribosomal RNA small subunit methyltransferase H from Escherichia coli O6:H1 (strain CFT073 / ATCC 700928 / UPEC).